Reading from the N-terminus, the 598-residue chain is Aspartate--tRNA(Asp/Asn) ligase (598 aa).

E175 contacts L-aspartate. The aspartate stretch occupies residues 199–202; that stretch reads QQFK. L-aspartate is bound by residues R221 and H452. ATP is bound at residue 221 to 223; sequence RDE. E486 lines the ATP pocket. R493 contacts L-aspartate. Position 538 to 541 (538 to 541) interacts with ATP; sequence GVDR.

Belongs to the class-II aminoacyl-tRNA synthetase family. Type 1 subfamily. As to quaternary structure, homodimer.

The protein localises to the cytoplasm. The enzyme catalyses tRNA(Asx) + L-aspartate + ATP = L-aspartyl-tRNA(Asx) + AMP + diphosphate. Functionally, aspartyl-tRNA synthetase with relaxed tRNA specificity since it is able to aspartylate not only its cognate tRNA(Asp) but also tRNA(Asn). Reaction proceeds in two steps: L-aspartate is first activated by ATP to form Asp-AMP and then transferred to the acceptor end of tRNA(Asp/Asn). This chain is Aspartate--tRNA(Asp/Asn) ligase, found in Gluconobacter oxydans (strain 621H) (Gluconobacter suboxydans).